The following is a 312-amino-acid chain: Pollen allergen Phl p 5.0101 (312 aa).

Residues 1–25 form the signal peptide; sequence MAVHQYTVALFLAVALVAGPAASYA.

This sequence belongs to the Poa p IX/Phl p VI allergen family.

The protein localises to the secreted. The polypeptide is Pollen allergen Phl p 5.0101 (Phleum pratense (Common timothy)).